The sequence spans 671 residues: cGMP-dependent protein kinase 1 (671 aa).

Serine 2 is subject to N-acetylserine. The stretch at 2–59 (SELEEDFAKILMLKEERIKELEKRLSEKEEEIQELKRKLHKCQSVLPVPSTHIGPRTT) forms a coiled coil. The segment at 2–102 (SELEEDFAKI…LIKEAILDND (101 aa)) is required for dimerization. Residues 9-44 (AKILMLKEERIKELEKRLSEKEEEIQELKRKLHKCQ) are leucine-zipper. The autoinhibitory domain stretch occupies residues 50–75 (PSTHIGPRTTRAQGISAEPQTYRSFH). At threonine 59 the chain carries Phosphothreonine; by autocatalysis. Positions 103–220 (FMKNLELSQI…EYMEFLKSVP (118 aa)) are cGMP-binding, high affinity. Residues 167-170 (GELA) and 177-178 (RT) contribute to the 3',5'-cyclic AMP site. 3',5'-cyclic GMP-binding positions include 167–170 (GELA), 177–178 (RT), arginine 282, 291–294 (GEKA), 301–302 (RT), and tyrosine 336. The cGMP-binding, low affinity stretch occupies residues 221 to 341 (TFQSLPEEIL…SNKAYEDAEA (121 aa)). A Protein kinase domain is found at 360 to 619 (FNIIDTLGVG…VKDIQKHKWF (260 aa)). ATP contacts are provided by residues 366-374 (LGVGGFGRV) and lysine 390. The active-site Proton acceptor is aspartate 484. Threonine 515 is modified (phosphothreonine). In terms of domain architecture, AGC-kinase C-terminal spans 620 to 671 (EGFNWEGLRKGTLTPPIIPSVASPTDTSNFDSFPEDNDEPPPDDNSGWDIDF). The interval 635 to 671 (PIIPSVASPTDTSNFDSFPEDNDEPPPDDNSGWDIDF) is disordered. Positions 652–661 (FPEDNDEPPP) are enriched in acidic residues.

It belongs to the protein kinase superfamily. AGC Ser/Thr protein kinase family. cGMP subfamily. Isoform alpha: parallel homodimer or heterodimer and also heterotetramer. Interacts directly with PPP1R12A. Non-covalent dimer of dimer of PRKG1-PRKG1 and PPP1R12A-PPP1R12A. This interaction targets PRKG1 to stress fibers to mediate smooth muscle cell relaxation and vasodilation in responses to rises in cGMP. Isoform beta: antiparallel homodimer. Part of cGMP kinase signaling complex at least composed of ACTA2/alpha-actin, CNN1/calponin H1, PLN/phospholamban, PRKG1 and ITPR1. Interacts with IRAG1. Forms a stable complex with ITPR1, IRAG1, and isoform beta of PRKG1. Interacts with TRPC7 (via ankyrin repeat domain). Isoform alpha interacts with RGS2. Interacts with GTF2I. Post-translationally, autophosphorylation increases kinase activity. In terms of processing, 65 kDa monomer is produced by proteolytic cleavage. As to expression, high concentrations are detected in various smooth muscle: lung, rumen, trachea, aorta, uterus and stomach. Isoform alpha is expressed predominantly in heart, cerebellum and lung, whereas the beta isoform is expressed in high concentrations in trachea, aorta, stomach and uterus.

Its subcellular location is the cytoplasm. The catalysed reaction is L-seryl-[protein] + ATP = O-phospho-L-seryl-[protein] + ADP + H(+). It catalyses the reaction L-threonyl-[protein] + ATP = O-phospho-L-threonyl-[protein] + ADP + H(+). Its activity is regulated as follows. In the absence of cGMP, PRKG1 activity is suppressed by autoinhibitory contacts. Functionally, serine/threonine protein kinase that acts as a key mediator of the nitric oxide (NO)/cGMP signaling pathway. GMP binding activates PRKG1, which phosphorylates serines and threonines on many cellular proteins. Numerous protein targets for PRKG1 phosphorylation are implicated in modulating cellular calcium, but the contribution of each of these targets may vary substantially among cell types. Proteins that are phosphorylated by PRKG1 regulate platelet activation and adhesion, smooth muscle contraction, cardiac function, gene expression, feedback of the NO-signaling pathway, and other processes involved in several aspects of the CNS like axon guidance, hippocampal and cerebellar learning, circadian rhythm and nociception. Smooth muscle relaxation is mediated through lowering of intracellular free calcium, by desensitization of contractile proteins to calcium, and by decrease in the contractile state of smooth muscle or in platelet activation. Regulates intracellular calcium levels via several pathways: phosphorylates IRAG1 and inhibits IP3-induced Ca(2+) release from intracellular stores, phosphorylation of KCNMA1 (BKCa) channels decreases intracellular Ca(2+) levels, which leads to increased opening of this channel. PRKG1 phosphorylates the canonical transient receptor potential channel (TRPC) family which inactivates the associated inward calcium current. Another mode of action of NO/cGMP/PKGI signaling involves PKGI-mediated inactivation of the Ras homolog gene family member A (RhoA). Phosphorylation of RHOA by PRKG1 blocks the action of this protein in myriad processes: regulation of RHOA translocation; decreasing contraction; controlling vesicle trafficking, reduction of myosin light chain phosphorylation resulting in vasorelaxation. Activation of PRKG1 by NO signaling also alters gene expression in a number of tissues. In smooth muscle cells, increased cGMP and PRKG1 activity influence expression of smooth muscle-specific contractile proteins, levels of proteins in the NO/cGMP signaling pathway, down-regulation of the matrix proteins osteopontin and thrombospondin-1 to limit smooth muscle cell migration and phenotype. Regulates vasodilator-stimulated phosphoprotein (VASP) functions in platelets and smooth muscle. This Bos taurus (Bovine) protein is cGMP-dependent protein kinase 1 (PRKG1).